A 364-amino-acid polypeptide reads, in one-letter code: Chorismate synthase (364 aa).

Positions 41-60 (MQHDLDRRRPGTSRYTTARR) are disordered. 2 residues coordinate NADP(+): Arg-48 and Arg-54. FMN-binding positions include 125-127 (RSS), 238-239 (NA), Gly-278, 293-297 (KPTSS), and Arg-319.

Belongs to the chorismate synthase family. As to quaternary structure, homotetramer. It depends on FMNH2 as a cofactor.

The catalysed reaction is 5-O-(1-carboxyvinyl)-3-phosphoshikimate = chorismate + phosphate. Its pathway is metabolic intermediate biosynthesis; chorismate biosynthesis; chorismate from D-erythrose 4-phosphate and phosphoenolpyruvate: step 7/7. Its function is as follows. Catalyzes the anti-1,4-elimination of the C-3 phosphate and the C-6 proR hydrogen from 5-enolpyruvylshikimate-3-phosphate (EPSP) to yield chorismate, which is the branch point compound that serves as the starting substrate for the three terminal pathways of aromatic amino acid biosynthesis. This reaction introduces a second double bond into the aromatic ring system. The sequence is that of Chorismate synthase from Shewanella baltica (strain OS185).